We begin with the raw amino-acid sequence, 330 residues long: Aspartate--ammonia ligase (330 aa).

The protein belongs to the class-II aminoacyl-tRNA synthetase family. AsnA subfamily.

The protein resides in the cytoplasm. It carries out the reaction L-aspartate + NH4(+) + ATP = L-asparagine + AMP + diphosphate + H(+). It participates in amino-acid biosynthesis; L-asparagine biosynthesis; L-asparagine from L-aspartate (ammonia route): step 1/1. In Salmonella agona (strain SL483), this protein is Aspartate--ammonia ligase.